Consider the following 44-residue polypeptide: Cytochrome b559 subunit beta (44 aa).

Residues 19–35 traverse the membrane as a helical segment; sequence WLAIHGLAIPTVFFLGA. His-23 contacts heme.

Belongs to the PsbE/PsbF family. As to quaternary structure, heterodimer of an alpha subunit and a beta subunit. PSII is composed of 1 copy each of membrane proteins PsbA, PsbB, PsbC, PsbD, PsbE, PsbF, PsbH, PsbI, PsbJ, PsbK, PsbL, PsbM, PsbT, PsbX, PsbY, PsbZ, Psb30/Ycf12, at least 3 peripheral proteins of the oxygen-evolving complex and a large number of cofactors. It forms dimeric complexes. Heme b serves as cofactor.

Its subcellular location is the plastid. It localises to the chloroplast thylakoid membrane. Its function is as follows. This b-type cytochrome is tightly associated with the reaction center of photosystem II (PSII). PSII is a light-driven water:plastoquinone oxidoreductase that uses light energy to abstract electrons from H(2)O, generating O(2) and a proton gradient subsequently used for ATP formation. It consists of a core antenna complex that captures photons, and an electron transfer chain that converts photonic excitation into a charge separation. The protein is Cytochrome b559 subunit beta of Porphyra purpurea (Red seaweed).